Here is a 247-residue protein sequence, read N- to C-terminus: Eukaryotic translation initiation factor 6 (247 aa).

Phosphoserine; by CK1 is present on residues S174 and S175.

This sequence belongs to the eIF-6 family. Monomer. Associates with the 60S ribosomal subunit. Post-translationally, phosphorylation at Ser-174 and Ser-175 promotes nuclear export.

It localises to the cytoplasm. Its subcellular location is the nucleus. The protein resides in the nucleolus. In terms of biological role, binds to the 60S ribosomal subunit and prevents its association with the 40S ribosomal subunit to form the 80S initiation complex in the cytoplasm. Is also involved in ribosome biogenesis. Associates with pre-60S subunits in the nucleus and is involved in its nuclear export. The sequence is that of Eukaryotic translation initiation factor 6 (tif6) from Emericella nidulans (strain FGSC A4 / ATCC 38163 / CBS 112.46 / NRRL 194 / M139) (Aspergillus nidulans).